The following is a 138-amino-acid chain: Putative nickel-responsive regulator (138 aa).

Ni(2+) is bound by residues H78, H89, H91, and C97.

It belongs to the transcriptional regulatory CopG/NikR family. Requires Ni(2+) as cofactor.

Its function is as follows. Transcriptional regulator. The polypeptide is Putative nickel-responsive regulator (Pyrococcus furiosus (strain ATCC 43587 / DSM 3638 / JCM 8422 / Vc1)).